The chain runs to 296 residues: Trimeric intracellular cation channel type A (296 aa).

Residues 1 to 19 (MELPGALQLGELAAAFASV) are Lumenal-facing. Residues 20-37 (PVFPLFDAAYFIVSVLYL) form a helical membrane-spanning segment. The Cytoplasmic segment spans residues 38–51 (KYEPGAVEMSRKSP). The chain crosses the membrane as a helical span at residues 52 to 73 (FASWLCAMLHCFGSYILADLLL). Glycine 74 contacts Ca(2+). The Lumenal portion of the chain corresponds to 74–85 (GESPIHYFSNNS). Residues 86-103 (SVILATAVWYLIFFCPMN) form a helical membrane-spanning segment. Residues 104 to 107 (LFYK) are Cytoplasmic-facing. The chain crosses the membrane as a helical span at residues 108-126 (CVSFLPVKLIFVAMKEVVR). A 1,2-diacyl-sn-glycero-3-phospho-(1D-myo-inositol-4,5-bisphosphate) contacts are provided by lysine 122 and arginine 126. Topologically, residues 127 to 144 (VRKIAAGVHHAHHQYHHG) are lumenal. Residues 145-162 (WFIMMATGWVKGSGVALM) traverse the membrane as a helical segment. Residues 163–183 (SNFEQLLRGVWRPETNEILHM) lie on the Cytoplasmic side of the membrane. A helical membrane pass occupies residues 184–201 (SFPTKASLYGTVLFTLQQ). The Lumenal portion of the chain corresponds to 202–209 (THWLPVSE). The helical transmembrane segment at 210-230 (ANLVFFFTMFMIVCKVFMTAT) threads the bilayer. The Cytoplasmic portion of the chain corresponds to 231-273 (HSHASPFAPVEGFICPVFFGSVSSGHTSHHNQHGHSHEASYQP). The disordered stretch occupies residues 256–296 (HTSHHNQHGHSHEASYQPPPPVKSKEELNEGTRKRKAKKAE). Over residues 278–287 (KSKEELNEGT) the composition is skewed to basic and acidic residues.

This sequence belongs to the TMEM38 family. Homotrimer; conformation seems to be controled by binding to diacylglycerol (DAG).

It localises to the sarcoplasmic reticulum membrane. It is found in the nucleus membrane. The catalysed reaction is K(+)(in) = K(+)(out). With respect to regulation, channel activity is activated by a change of voltage within the sarcoplasmic reticulum lumen and blocked by luminal high Ca(2+) levels. Intracellular monovalent cation channel required for maintenance of rapid intracellular calcium release. Acts as a potassium counter-ion channel that functions in synchronization with calcium release from intracellular stores. Opened by a change of voltage within the sarcoplasmic reticulum lumen. The polypeptide is Trimeric intracellular cation channel type A (TMEM38A) (Gallus gallus (Chicken)).